Here is a 474-residue protein sequence, read N- to C-terminus: Glutamyl-tRNA(Gln) amidotransferase subunit A (474 aa).

Active-site charge relay system residues include K76 and S151. The Acyl-ester intermediate role is filled by S175.

The protein belongs to the amidase family. GatA subfamily. As to quaternary structure, heterotrimer of A, B and C subunits.

It carries out the reaction L-glutamyl-tRNA(Gln) + L-glutamine + ATP + H2O = L-glutaminyl-tRNA(Gln) + L-glutamate + ADP + phosphate + H(+). Its function is as follows. Allows the formation of correctly charged Gln-tRNA(Gln) through the transamidation of misacylated Glu-tRNA(Gln) in organisms which lack glutaminyl-tRNA synthetase. The reaction takes place in the presence of glutamine and ATP through an activated gamma-phospho-Glu-tRNA(Gln). The sequence is that of Glutamyl-tRNA(Gln) amidotransferase subunit A from Chlorobium chlorochromatii (strain CaD3).